The chain runs to 122 residues: uncharacterized protein (122 aa).

Thr55 is modified (phosphothreonine). A phosphoserine mark is found at Ser72, Ser86, Ser96, Ser112, and Ser118.

The protein localises to the cytoplasm. This is an uncharacterized protein from Homo sapiens (Human).